The sequence spans 692 residues: Methionine--tRNA ligase (692 aa).

Positions 12–22 (PYANGPLHLGH) match the 'HIGH' region motif. 4 residues coordinate Zn(2+): cysteine 143, cysteine 146, cysteine 156, and cysteine 159. The short motif at 330-334 (KMSKS) is the 'KMSKS' region element. Lysine 333 lines the ATP pocket. The segment covering 554–563 (AAAAPAAKPA) has biased composition (low complexity). Residues 554-575 (AAAAPAAKPAAPAPAPAPAKDE) are disordered. One can recognise a tRNA-binding domain in the interval 589-692 (DFAKLDLRIG…SGAQPGMPVR (104 aa)).

This sequence belongs to the class-I aminoacyl-tRNA synthetase family. MetG type 1 subfamily. As to quaternary structure, homodimer. Requires Zn(2+) as cofactor.

It localises to the cytoplasm. The enzyme catalyses tRNA(Met) + L-methionine + ATP = L-methionyl-tRNA(Met) + AMP + diphosphate. Its function is as follows. Is required not only for elongation of protein synthesis but also for the initiation of all mRNA translation through initiator tRNA(fMet) aminoacylation. This is Methionine--tRNA ligase from Stenotrophomonas maltophilia (strain K279a).